The chain runs to 388 residues: Ovalbumin-related protein Y (388 aa).

The cysteines at positions 74 and 121 are disulfide-linked. N-linked (GlcNAc...) asparagine glycosylation is found at Asn-95, Asn-215, Asn-293, and Asn-312.

It belongs to the serpin family. Ov-serpin subfamily. Post-translationally, N-glycosylated on at least two Asn residues by ovomucoid type carbohydrate units. The N-terminus is blocked. As to expression, major protein of egg white. Expressed in the magnum of the oviduct (at protein level).

The protein localises to the secreted. The chain is Ovalbumin-related protein Y (SERPINB14B) from Gallus gallus (Chicken).